Here is a 205-residue protein sequence, read N- to C-terminus: Ribosomal RNA small subunit methyltransferase G 1 (205 aa).

Residues glycine 77, leucine 82, 100-102 (EKS), 129-130 (LE), and arginine 138 contribute to the S-adenosyl-L-methionine site.

The protein belongs to the methyltransferase superfamily. RNA methyltransferase RsmG family.

The protein localises to the cytoplasm. It carries out the reaction guanosine(527) in 16S rRNA + S-adenosyl-L-methionine = N(7)-methylguanosine(527) in 16S rRNA + S-adenosyl-L-homocysteine. Specifically methylates the N7 position of guanine in position 527 of 16S rRNA. In Bdellovibrio bacteriovorus (strain ATCC 15356 / DSM 50701 / NCIMB 9529 / HD100), this protein is Ribosomal RNA small subunit methyltransferase G 1.